A 117-amino-acid chain; its full sequence is Immunoglobulin heavy variable 3-48 (117 aa).

An N-terminal signal peptide occupies residues 1 to 19; the sequence is MELGLCWVFLVAILEGVQC. Residues 20-44 are framework-1; it reads EVQLVESGGGLVQPGGSLRLSCAAS. Positions 20–117 constitute an Ig-like domain; it reads EVQLVESGGG…EDTAVYYCAR (98 aa). Residues Cys-41 and Cys-115 are joined by a disulfide bond. The complementarity-determining-1 stretch occupies residues 45-52; that stretch reads GFTFSSYE. A framework-2 region spans residues 53–69; it reads MNWVRQAPGKGLEWVSY. A complementarity-determining-2 region spans residues 70–77; sequence ISSSGSTI. The tract at residues 78–115 is framework-3; it reads YYADSVKGRFTISRDNAKNSLYLQMNSLRAEDTAVYYC. The segment at 116–117 is complementarity-determining-3; that stretch reads AR.

Immunoglobulins are composed of two identical heavy chains and two identical light chains; disulfide-linked. In terms of processing, the N-terminus is blocked.

It is found in the secreted. Its subcellular location is the cell membrane. V region of the variable domain of immunoglobulin heavy chains that participates in the antigen recognition. Immunoglobulins, also known as antibodies, are membrane-bound or secreted glycoproteins produced by B lymphocytes. In the recognition phase of humoral immunity, the membrane-bound immunoglobulins serve as receptors which, upon binding of a specific antigen, trigger the clonal expansion and differentiation of B lymphocytes into immunoglobulins-secreting plasma cells. Secreted immunoglobulins mediate the effector phase of humoral immunity, which results in the elimination of bound antigens. The antigen binding site is formed by the variable domain of one heavy chain, together with that of its associated light chain. Thus, each immunoglobulin has two antigen binding sites with remarkable affinity for a particular antigen. The variable domains are assembled by a process called V-(D)-J rearrangement and can then be subjected to somatic hypermutations which, after exposure to antigen and selection, allow affinity maturation for a particular antigen. This Homo sapiens (Human) protein is Immunoglobulin heavy variable 3-48.